We begin with the raw amino-acid sequence, 399 residues long: Lymphoid enhancer-binding factor 1 (399 aa).

Residues 1 to 14 (MPQLSGGGGGGGGD) show a composition bias toward gly residues. The tract at residues 1 to 62 (MPQLSGGGGG…IKSSLVNESE (62 aa)) is CTNNB1-binding. The tract at residues 1-104 (MPQLSGGGGG…KHPDGGLYNK (104 aa)) is disordered. Composition is skewed to basic and acidic residues over residues 24 to 45 (IPFK…SHPE) and 82 to 98 (PYHD…KHPD). Lysine 27 participates in a covalent cross-link: Glycyl lysine isopeptide (Lys-Gly) (interchain with G-Cter in SUMO). Serine 132 carries the phosphoserine modification. At threonine 155 the chain carries Phosphothreonine; by NLK. The residue at position 166 (serine 166) is a Phosphoserine; by NLK. Disordered regions lie at residues 166 to 192 (SPGS…PAPD) and 268 to 298 (VKQE…KRPH). Residue lysine 269 forms a Glycyl lysine isopeptide (Lys-Gly) (interchain with G-Cter in SUMO) linkage. Positions 269–296 (KQEHPHTDSDLMHVKPQHEQRKEQEPKR) are enriched in basic and acidic residues. Residues 299–367 (IKKPLNAFML…LHMQLYPGWS (69 aa)) constitute a DNA-binding region (HMG box). The disordered stretch occupies residues 369 to 399 (RDNYGKKKKRKREKLQESASGTGPRMTAAYI).

It belongs to the TCF/LEF family. Binds the armadillo repeat of CTNNB1 and forms a stable complex. Interacts with EP300, TLE1 and PIASG. Binds ALYREF/THOC4, MDFI and MDFIC. Interacts with NLK. Interacts with DAZAP2. In terms of processing, phosphorylated at Thr-155 and/or Ser-166 by NLK. Phosphorylation by NLK at these sites represses LEF1-mediated transcriptional activation of target genes of the canonical Wnt signaling pathway. As to expression, detected in thymus. Not detected in normal colon, but highly expressed in colon cancer biopsies and colon cancer cell lines. Expressed in several pancreatic tumors and weakly expressed in normal pancreatic tissue. Isoforms 1 and 5 are detected in several pancreatic cell lines.

It localises to the nucleus. Transcription factor that binds DNA in a sequence-specific manner. Participates in the Wnt signaling pathway. Activates transcription of target genes in the presence of CTNNB1 and EP300. PIAG antagonizes both Wnt-dependent and Wnt-independent activation by LEF1. TLE1, TLE2, TLE3 and TLE4 repress transactivation mediated by LEF1 and CTNNB1. Regulates T-cell receptor alpha enhancer function. Required for IL17A expressing gamma-delta T-cell maturation and development, via binding to regulator loci of BLK to modulate expression. Acts as a positive regulator of odontoblast differentiation during mesenchymal tooth germ formation, expression is repressed during the bell stage by MSX1-mediated inhibition of CTNNB1 signaling. May play a role in hair cell differentiation and follicle morphogenesis. Functionally, transcriptionally activates MYC and CCND1 expression and enhances proliferation of pancreatic tumor cells. In terms of biological role, lacks the CTNNB1 interaction domain and may therefore be an antagonist for Wnt signaling. Its function is as follows. Transcriptionally activates the fibronectin promoter, binds to and represses transcription from the E-cadherin promoter in a CTNNB1-independent manner, and is involved in reducing cellular aggregation and increasing cell migration of pancreatic cancer cells. The polypeptide is Lymphoid enhancer-binding factor 1 (Homo sapiens (Human)).